We begin with the raw amino-acid sequence, 424 residues long: uncharacterized protein (424 aa).

Residue K259 is modified to N6-(pyridoxal phosphate)lysine.

The protein belongs to the class-III pyridoxal-phosphate-dependent aminotransferase family. Pyridoxal 5'-phosphate serves as cofactor.

This is an uncharacterized protein from Archaeoglobus fulgidus (strain ATCC 49558 / DSM 4304 / JCM 9628 / NBRC 100126 / VC-16).